The primary structure comprises 509 residues: ATP synthase subunit alpha (509 aa).

Residue 169–176 (GDRQTGKT) coordinates ATP.

Belongs to the ATPase alpha/beta chains family. As to quaternary structure, F-type ATPases have 2 components, CF(1) - the catalytic core - and CF(0) - the membrane proton channel. CF(1) has five subunits: alpha(3), beta(3), gamma(1), delta(1), epsilon(1). CF(0) has three main subunits: a(1), b(2) and c(9-12). The alpha and beta chains form an alternating ring which encloses part of the gamma chain. CF(1) is attached to CF(0) by a central stalk formed by the gamma and epsilon chains, while a peripheral stalk is formed by the delta and b chains.

It is found in the cell inner membrane. The catalysed reaction is ATP + H2O + 4 H(+)(in) = ADP + phosphate + 5 H(+)(out). In terms of biological role, produces ATP from ADP in the presence of a proton gradient across the membrane. The alpha chain is a regulatory subunit. The polypeptide is ATP synthase subunit alpha (Bradyrhizobium diazoefficiens (strain JCM 10833 / BCRC 13528 / IAM 13628 / NBRC 14792 / USDA 110)).